We begin with the raw amino-acid sequence, 141 residues long: Large ribosomal subunit protein uL16 (141 aa).

The protein belongs to the universal ribosomal protein uL16 family. Part of the 50S ribosomal subunit.

Binds 23S rRNA and is also seen to make contacts with the A and possibly P site tRNAs. The protein is Large ribosomal subunit protein uL16 of Campylobacter fetus subsp. fetus (strain 82-40).